The following is a 610-amino-acid chain: UvrABC system protein C (610 aa).

The region spanning 13 to 91 (HLPGVYRMYD…IKENQPKYNV (79 aa)) is the GIY-YIG domain. The UVR domain occupies 201 to 236 (GQVVEHLVQKMENAAQELDFEAAARFRDQIQSVRAV).

It belongs to the UvrC family. Interacts with UvrB in an incision complex.

Its subcellular location is the cytoplasm. The UvrABC repair system catalyzes the recognition and processing of DNA lesions. UvrC both incises the 5' and 3' sides of the lesion. The N-terminal half is responsible for the 3' incision and the C-terminal half is responsible for the 5' incision. The chain is UvrABC system protein C from Actinobacillus pleuropneumoniae serotype 5b (strain L20).